The chain runs to 92 residues: Small ribosomal subunit protein uS19c (92 aa).

Belongs to the universal ribosomal protein uS19 family.

It localises to the plastid. Its subcellular location is the chloroplast. Protein S19 forms a complex with S13 that binds strongly to the 16S ribosomal RNA. The polypeptide is Small ribosomal subunit protein uS19c (Nicotiana tomentosiformis (Tobacco)).